Reading from the N-terminus, the 144-residue chain is Large ribosomal subunit protein uL15 (144 aa).

A disordered region spans residues Met1 to Pro56. Gly residues predominate over residues Arg21 to Ala31.

It belongs to the universal ribosomal protein uL15 family. Part of the 50S ribosomal subunit.

Functionally, binds to the 23S rRNA. The protein is Large ribosomal subunit protein uL15 of Burkholderia cenocepacia (strain HI2424).